We begin with the raw amino-acid sequence, 415 residues long: uncharacterized protein (415 aa).

The TRAM domain occupies 1 to 52 (MQDLTINAIGAQGDGLARTADGKPAFVPLTLPGEVVRAKMDGARGEVVEILA). [4Fe-4S] cluster-binding residues include Cys-62, Cys-68, Cys-71, and Cys-147. S-adenosyl-L-methionine-binding residues include Gln-252, Tyr-279, Glu-299, and Asp-347. Cys-373 functions as the Nucleophile in the catalytic mechanism.

The protein belongs to the class I-like SAM-binding methyltransferase superfamily. RNA M5U methyltransferase family.

This is an uncharacterized protein from Caulobacter vibrioides (strain ATCC 19089 / CIP 103742 / CB 15) (Caulobacter crescentus).